Here is a 485-residue protein sequence, read N- to C-terminus: Glutamyl-tRNA(Gln) amidotransferase subunit A (485 aa).

Catalysis depends on charge relay system residues K79 and S154. S178 functions as the Acyl-ester intermediate in the catalytic mechanism.

It belongs to the amidase family. GatA subfamily. Heterotrimer of A, B and C subunits.

The enzyme catalyses L-glutamyl-tRNA(Gln) + L-glutamine + ATP + H2O = L-glutaminyl-tRNA(Gln) + L-glutamate + ADP + phosphate + H(+). Its function is as follows. Allows the formation of correctly charged Gln-tRNA(Gln) through the transamidation of misacylated Glu-tRNA(Gln) in organisms which lack glutaminyl-tRNA synthetase. The reaction takes place in the presence of glutamine and ATP through an activated gamma-phospho-Glu-tRNA(Gln). The protein is Glutamyl-tRNA(Gln) amidotransferase subunit A of Clostridium botulinum (strain ATCC 19397 / Type A).